A 1070-amino-acid chain; its full sequence is DNA-directed RNA polymerase subunit beta (1070 aa).

It belongs to the RNA polymerase beta chain family. In plastids the minimal PEP RNA polymerase catalytic core is composed of four subunits: alpha, beta, beta', and beta''. When a (nuclear-encoded) sigma factor is associated with the core the holoenzyme is formed, which can initiate transcription.

It localises to the plastid. Its subcellular location is the chloroplast. It carries out the reaction RNA(n) + a ribonucleoside 5'-triphosphate = RNA(n+1) + diphosphate. Functionally, DNA-dependent RNA polymerase catalyzes the transcription of DNA into RNA using the four ribonucleoside triphosphates as substrates. The protein is DNA-directed RNA polymerase subunit beta of Phalaenopsis aphrodite subsp. formosana (Moth orchid).